Consider the following 481-residue polypeptide: Aspartyl/glutamyl-tRNA(Asn/Gln) amidotransferase subunit B (481 aa).

The protein belongs to the GatB/GatE family. GatB subfamily. In terms of assembly, heterotrimer of A, B and C subunits.

The enzyme catalyses L-glutamyl-tRNA(Gln) + L-glutamine + ATP + H2O = L-glutaminyl-tRNA(Gln) + L-glutamate + ADP + phosphate + H(+). It catalyses the reaction L-aspartyl-tRNA(Asn) + L-glutamine + ATP + H2O = L-asparaginyl-tRNA(Asn) + L-glutamate + ADP + phosphate + 2 H(+). Allows the formation of correctly charged Asn-tRNA(Asn) or Gln-tRNA(Gln) through the transamidation of misacylated Asp-tRNA(Asn) or Glu-tRNA(Gln) in organisms which lack either or both of asparaginyl-tRNA or glutaminyl-tRNA synthetases. The reaction takes place in the presence of glutamine and ATP through an activated phospho-Asp-tRNA(Asn) or phospho-Glu-tRNA(Gln). The chain is Aspartyl/glutamyl-tRNA(Asn/Gln) amidotransferase subunit B from Pseudomonas paraeruginosa (strain DSM 24068 / PA7) (Pseudomonas aeruginosa (strain PA7)).